Here is a 157-residue protein sequence, read N- to C-terminus: Phospholipase A2 phaiodactylipin (157 aa).

Positions 34 and 36 each coordinate Ca(2+). Disulfide bonds link C35/C56, C55/C94, C62/C87, C85/C127, and C132/C143. N43 is a glycosylation site (N-linked (GlcNAc...) asparagine). Residue H59 is part of the active site. D60 contacts Ca(2+). D88 is an active-site residue. N101 carries N-linked (GlcNAc...) asparagine glycosylation. The propeptide at 134-139 (DEKSAR) is removed in mature form. The N-linked (GlcNAc...) asparagine glycan is linked to N153.

This sequence belongs to the phospholipase A2 family. Group III subfamily. As to quaternary structure, heterodimer composed of a small subunit and a large subunit; disulfide-linked. Requires Ca(2+) as cofactor. In terms of tissue distribution, expressed by the venom gland.

It is found in the secreted. It carries out the reaction a 1,2-diacyl-sn-glycero-3-phosphocholine + H2O = a 1-acyl-sn-glycero-3-phosphocholine + a fatty acid + H(+). Its function is as follows. Scorpion venom phospholipase A2 (PLA2) that is lethal to crickets and crustaceae. Causes inflammation in mice and lysis of human erythrocytes. Has a mild anticoagulant effect on human platelets. PLA2 catalyzes the calcium-dependent hydrolysis of the 2-acyl groups in 3-sn-phosphoglycerides. The sequence is that of Phospholipase A2 phaiodactylipin from Anuroctonus phaiodactylus (Mafia scorpion).